The primary structure comprises 120 residues: MARVKFGKVTRARRKRWIKRAKGYYGTKHSSYKKAHEQVVRSMAYAFIGRKQKKRDFRKLWIVRINAAVRPYGLSYSKFMNGLKLANIDVNRKMLSELAISNPEQFKLLVDASNKALTSK.

The protein belongs to the bacterial ribosomal protein bL20 family.

Functionally, binds directly to 23S ribosomal RNA and is necessary for the in vitro assembly process of the 50S ribosomal subunit. It is not involved in the protein synthesizing functions of that subunit. This chain is Large ribosomal subunit protein bL20, found in Mesoplasma florum (strain ATCC 33453 / NBRC 100688 / NCTC 11704 / L1) (Acholeplasma florum).